The chain runs to 217 residues: Glycosylphosphatidylinositol anchor biosynthesis protein 11 (217 aa).

A glycan (N-linked (GlcNAc...) asparagine) is linked at Asn20. Transmembrane regions (helical) follow at residues Val41–Phe61, Asp66–Phe86, Phe107–Phe127, Trp139–Cys159, Tyr169–Asp189, and Val197–Ile217.

It belongs to the PIGF family.

Its subcellular location is the endoplasmic reticulum membrane. It participates in glycolipid biosynthesis; glycosylphosphatidylinositol-anchor biosynthesis. Its function is as follows. Acts in the GPI biosynthetic pathway between GlcNAc-PI synthesis and GPI transfer to protein. This Kluyveromyces lactis (strain ATCC 8585 / CBS 2359 / DSM 70799 / NBRC 1267 / NRRL Y-1140 / WM37) (Yeast) protein is Glycosylphosphatidylinositol anchor biosynthesis protein 11 (GPI11).